Reading from the N-terminus, the 399-residue chain is Secreted RxLR effector protein 36 (399 aa).

A signal peptide spans 1-21; that stretch reads MRGTIYVAIAILVAASSRSSA. A RxLR-dEER motif is present at residues 50-71; that stretch reads RILRESRGSNDKLAVGAGDEER. N-linked (GlcNAc...) asparagine glycosylation occurs at Asn-75. Residues 126–145 form a disordered region; the sequence is IDPTPSNLGGQALHAPPNPD.

The protein belongs to the RxLR effector family.

It is found in the secreted. It localises to the host nucleus. Its function is as follows. Secreted effector that completely suppresses the host cell death induced by cell death-inducing proteins. This chain is Secreted RxLR effector protein 36, found in Plasmopara viticola (Downy mildew of grapevine).